Consider the following 618-residue polypeptide: Leucine aminopeptidase 2 (618 aa).

A peptide is bound by residues 139–141 and 271–276; these read QCQ and PYGGME. Residue His-300 coordinates Zn(2+). Glu-301 serves as the catalytic Proton acceptor. Residues His-304 and Glu-323 each coordinate Zn(2+). Tyr-389 (proton donor) is an active-site residue.

Belongs to the peptidase M1 family. The cofactor is Zn(2+).

The protein localises to the cytoplasm. Its subcellular location is the nucleus. The enzyme catalyses an epoxide + H2O = an ethanediol. Functionally, aminopeptidase that preferentially cleaves di- and tripeptides. Also has low epoxide hydrolase activity (in vitro). Can hydrolyze the epoxide leukotriene LTA(4) but it forms preferentially 5,6-dihydroxy-7,9,11,14-eicosatetraenoic acid rather than the cytokine leukotriene B(4) as the product compared to the homologous mammalian enzyme (in vitro). In Aspergillus clavatus (strain ATCC 1007 / CBS 513.65 / DSM 816 / NCTC 3887 / NRRL 1 / QM 1276 / 107), this protein is Leucine aminopeptidase 2.